We begin with the raw amino-acid sequence, 122 residues long: MIQQESRLRVADNTGAKEILCIRVLGGSSRRYAGIGDIIVATVKDAIPGGNIKKGEVVKAVIVRTTKERRRPDGSYIKFDENAAVLIKPDNDPRGTRIFGPVGRELREKKFMKIVSLAPEVL.

The protein belongs to the universal ribosomal protein uL14 family. In terms of assembly, part of the 50S ribosomal subunit. Forms a cluster with proteins L3 and L19. In the 70S ribosome, L14 and L19 interact and together make contacts with the 16S rRNA in bridges B5 and B8.

Its function is as follows. Binds to 23S rRNA. Forms part of two intersubunit bridges in the 70S ribosome. The polypeptide is Large ribosomal subunit protein uL14 (Rhodococcus jostii (strain RHA1)).